Here is a 285-residue protein sequence, read N- to C-terminus: NADPH-dependent 7-cyano-7-deazaguanine reductase (285 aa).

91 to 93 is a binding site for substrate; sequence IES. Residue 93–94 coordinates NADPH; it reads SK. The Thioimide intermediate role is filled by Cys193. Asp200 functions as the Proton donor in the catalytic mechanism. Residue 232–233 coordinates substrate; the sequence is HE. Position 261–262 (261–262) interacts with NADPH; that stretch reads RG.

Belongs to the GTP cyclohydrolase I family. QueF type 2 subfamily. As to quaternary structure, homodimer.

It localises to the cytoplasm. It carries out the reaction 7-aminomethyl-7-carbaguanine + 2 NADP(+) = 7-cyano-7-deazaguanine + 2 NADPH + 3 H(+). It functions in the pathway tRNA modification; tRNA-queuosine biosynthesis. Catalyzes the NADPH-dependent reduction of 7-cyano-7-deazaguanine (preQ0) to 7-aminomethyl-7-deazaguanine (preQ1). The sequence is that of NADPH-dependent 7-cyano-7-deazaguanine reductase from Shewanella baltica (strain OS223).